The following is a 420-amino-acid chain: MSGRPRTTSFAESCKPVQQPSAFGSMKVSRDKDGSKVTTVVATPGQGPDRPQEVSYTDTKVIGNGSFGVVYQAKLCDSGELVAIKKVLQDKRFKNRELQIMRKLDHCNIVRLRYFFYSSGEKKDVVYLNLVLDYVPETVYRVARHYSRAKQTLPVIYVKLYMYQLFRSLAYIHSFGICHRDIKPQNLLLDPDTAVLKLCDFGSAKQLVRGEPNVSYICSRYYRAPELIFGATDYTSSIDVWSAGCVLAELLLGQPIFPGDSGVDQLVEIIKVLGTPTREQIREMNPNYTEFKFPQIKAHPWTKVFRPRTPPEAIALCSRLLEYTPTARLTPLEACAHSFFDELRDPNVKLPNGRDTPALFNFTTQELSSNPPLATILIPPHARIQAAASTPTNATAASDANAGDRGQTNNAAFASASNST.

The segment covering 1 to 22 has biased composition (polar residues); it reads MSGRPRTTSFAESCKPVQQPSA. Residues 1-35 are disordered; the sequence is MSGRPRTTSFAESCKPVQQPSAFGSMKVSRDKDGS. The residue at position 9 (Ser9) is a Phosphoserine; by PKB/AKT1, RPS6KA3 and SGK3. Cys14 carries the S-palmitoyl cysteine lipid modification. Positions 56-340 constitute a Protein kinase domain; that stretch reads YTDTKVIGNG…PLEACAHSFF (285 aa). ATP contacts are provided by residues 62-70 and Lys85; that span reads IGNGSFGVV. Residue Asp181 is the Proton acceptor of the active site. Tyr216 carries the phosphotyrosine modification. Composition is skewed to low complexity over residues 387–401 and 409–420; these read AASTPTNATAASDAN and NNAAFASASNST. Residues 387–420 are disordered; it reads AASTPTNATAASDANAGDRGQTNNAAFASASNST. A Phosphoserine modification is found at Ser389. Position 390 is a phosphothreonine (Thr390).

It belongs to the protein kinase superfamily. CMGC Ser/Thr protein kinase family. GSK-3 subfamily. In terms of assembly, monomer. Interacts with DAB2IP (via C2 domain); the interaction stimulates GSK3B kinase activation. Interacts (via C2 domain) with PPP2CA. Interacts with ARRB2, AXIN1, CABYR, DISC1, MMP2, MUC1, NIN, PRUNE1 and ZBED3. Interacts with AXIN1; the interaction mediates hyperphosphorylation of CTNNB1 leading to its ubiquitination and destruction. Interacts with and phosphorylates SNAI1. Interacts with DNM1L (via a C-terminal domain). Found in a complex composed of MACF1, APC, AXIN1, CTNNB1 and GSK3B. Interacts with SGK3. Interacts with the CLOCK-BMAL1 heterodimer. Interacts with the BMAL1. Interacts with CTNND2. The complex composed, at least, of APC, CTNNB1 and GSK3B interacts with JPT1; the interaction requires the inactive form of GSK3B (phosphorylated at 'Ser-9'). Forms a complex composed of PRKAR2A or PRKAR2B, GSK3B and GSKIP through GSKIP interaction; facilitates PKA-induced phosphorylation and regulates GSK3B activity. Interacts with GSKIP. Interacts with GID8. Interacts with PIWIL2. Interacts with LMBR1L. Interacts with DDX3X. Interacts with BIRC2. Interacts with TNFRSF10B; TNFRSF10B stimulation inhibits GSK3B kinase activity. Found in a complex with SLC39A6, SLC39A10 and with GSK3B that controls NCAM1 phosphorylation. Interacts with PKP3 (via ARM repeats); the interaction may be involved in PKP3 protein degradation. Post-translationally, phosphorylated by AKT1 and ILK1. Upon insulin-mediated signaling, the activated PKB/AKT1 and RPS6KA3 protein kinases phosphorylate and deactivate GSK3B, resulting in the dephosphorylation and activation of GYS1. Activated by phosphorylation at Tyr-216. Inactivated by phosphorylation at Ser-9. In terms of processing, mono-ADP-ribosylation by PARP10 negatively regulates kinase activity. Palmitoylated. Palmitoylation by ZDHHC4 prevents AKT1-mediated phosphorylation.

Its subcellular location is the cytoplasm. The protein resides in the nucleus. It is found in the cell membrane. The enzyme catalyses L-seryl-[tau protein] + ATP = O-phospho-L-seryl-[tau protein] + ADP + H(+). It catalyses the reaction L-threonyl-[tau protein] + ATP = O-phospho-L-threonyl-[tau protein] + ADP + H(+). It carries out the reaction L-seryl-[protein] + ATP = O-phospho-L-seryl-[protein] + ADP + H(+). The catalysed reaction is L-threonyl-[protein] + ATP = O-phospho-L-threonyl-[protein] + ADP + H(+). Activated by phosphorylation at Tyr-216. In response to insulin, inhibited by phosphorylation at Ser-9 by PKB/AKT1; phosphorylation at this site causes a conformational change, preventing access of substrates to the active site. Inhibited by IL22 treatment which also triggers phosphorylation at Ser-9, promoting inactivation. Inhibited by lithium. Functionally, constitutively active protein kinase that acts as a negative regulator in the hormonal control of glucose homeostasis, Wnt signaling and regulation of transcription factors and microtubules, by phosphorylating and inactivating glycogen synthase (GYS1 or GYS2), EIF2B, CTNNB1/beta-catenin, APC, AXIN1, DPYSL2/CRMP2, JUN, NFATC1/NFATC, MAPT/TAU and MACF1. Requires primed phosphorylation of the majority of its substrates. In skeletal muscle, contributes to insulin regulation of glycogen synthesis by phosphorylating and inhibiting GYS1 activity and hence glycogen synthesis. May also mediate the development of insulin resistance by regulating activation of transcription factors. Regulates protein synthesis by controlling the activity of initiation factor 2B (EIF2BE/EIF2B5) in the same manner as glycogen synthase. In Wnt signaling, GSK3B forms a multimeric complex with APC, AXIN1 and CTNNB1/beta-catenin and phosphorylates the N-terminus of CTNNB1 leading to its degradation mediated by ubiquitin/proteasomes. Phosphorylates JUN at sites proximal to its DNA-binding domain, thereby reducing its affinity for DNA. Phosphorylates NFATC1/NFATC on conserved serine residues promoting NFATC1/NFATC nuclear export, shutting off NFATC1/NFATC gene regulation, and thereby opposing the action of calcineurin. Phosphorylates MAPT/TAU on 'Thr-548', decreasing significantly MAPT/TAU ability to bind and stabilize microtubules. MAPT/TAU is the principal component of neurofibrillary tangles in Alzheimer disease. Plays an important role in ERBB2-dependent stabilization of microtubules at the cell cortex. Phosphorylates MACF1, inhibiting its binding to microtubules which is critical for its role in bulge stem cell migration and skin wound repair. Probably regulates NF-kappa-B (NFKB1) at the transcriptional level and is required for the NF-kappa-B-mediated anti-apoptotic response to TNF-alpha (TNF/TNFA). Negatively regulates replication in pancreatic beta-cells, resulting in apoptosis, loss of beta-cells and diabetes. Through phosphorylation of the anti-apoptotic protein MCL1, may control cell apoptosis in response to growth factors deprivation. Phosphorylates MUC1 in breast cancer cells, decreasing the interaction of MUC1 with CTNNB1/beta-catenin. Is necessary for the establishment of neuronal polarity and axon outgrowth. Phosphorylates MARK2, leading to inhibition of its activity. Phosphorylates SIK1 at 'Thr-182', leading to sustainment of its activity. Phosphorylates ZC3HAV1 which enhances its antiviral activity. Phosphorylates SNAI1, leading to its ubiquitination and proteasomal degradation. Phosphorylates SFPQ at 'Thr-687' upon T-cell activation. Phosphorylates NR1D1 st 'Ser-55' and 'Ser-59' and stabilizes it by protecting it from proteasomal degradation. Regulates the circadian clock via phosphorylation of the major clock components including BMAL1, CLOCK and PER2. Phosphorylates CLOCK AT 'Ser-427' and targets it for proteasomal degradation. Phosphorylates BMAL1 at 'Ser-17' and 'Ser-21' and primes it for ubiquitination and proteasomal degradation. Phosphorylates FBXL2 at 'Thr-404' and primes it for ubiquitination by the SCF(FBXO3) complex and proteasomal degradation. Phosphorylates OGT at 'Ser-3' or 'Ser-4' which positively regulates its activity. Phosphorylates MYCN in neuroblastoma cells which may promote its degradation. Regulates the circadian rhythmicity of hippocampal long-term potentiation and BMAL1 and PER2 expression. Acts as a regulator of autophagy by mediating phosphorylation of KAT5/TIP60 under starvation conditions, activating KAT5/TIP60 acetyltransferase activity and promoting acetylation of key autophagy regulators, such as ULK1 and RUBCNL/Pacer. Negatively regulates extrinsic apoptotic signaling pathway via death domain receptors. Promotes the formation of an anti-apoptotic complex, made of DDX3X, BRIC2 and GSK3B, at death receptors, including TNFRSF10B. The anti-apoptotic function is most effective with weak apoptotic signals and can be overcome by stronger stimulation. Phosphorylates E2F1, promoting the interaction between E2F1 and USP11, stabilizing E2F1 and promoting its activity. Phosphorylates mTORC2 complex component RICTOR at 'Ser-1235' in response to endoplasmic stress, inhibiting mTORC2. Phosphorylates FXR1, promoting FXR1 ubiquitination by the SCF(FBXO4) complex and FXR1 degradation by the proteasome. Phosphorylates interleukin-22 receptor subunit IL22RA1, preventing its proteasomal degradation. The polypeptide is Glycogen synthase kinase-3 beta (Spermophilus citellus (European ground squirrel)).